We begin with the raw amino-acid sequence, 497 residues long: Probable FAD-binding monooxygenase AlmA (497 aa).

Residues 4-24 traverse the membrane as a helical segment; that stretch reads QVDVLIIGAGISGIGLAVHLS. FAD is bound by residues S15, E36, D56, F62, and V104. 54-56 contacts NADP(+); it reads RSD. NADP(+) contacts are provided by residues 184–190, 208–209, and 292–293; these read SGATAIT, RS, and RL. V395 serves as a coordination point for FAD.

This sequence belongs to the FAD-binding monooxygenase family. The cofactor is FAD.

It localises to the cell membrane. The protein operates within hydrocarbon metabolism; alkane degradation. In terms of biological role, is involved in the degradation of n-alkanes with C chain lengths of 32 and longer. Allows Acinetobacter sp. strain DSM 17874 to grow on long-chain n-alkanes such as dotriacontane (C32H66) or hexatriacontane (C36H74) as a sole carbon source. In Acinetobacter sp, this protein is Probable FAD-binding monooxygenase AlmA.